The sequence spans 200 residues: MTSILYLASQSPRRRELLTQLGVTYELLLADAGEDAEALEAVRPGESPDDYVQRVCALKADAALQRRARRGLPDAPILTSDTTVCRGGDILGKPADARDAAAMLASLSGTTHRVLTAVTVATSAGQRHALSISHVTFRPILAPEIERYVASGEPLGKAGAYGIQGRAAEFVERIDGSYSGIMGLPLFETAALLREAGLHF.

The Proton acceptor role is filled by D81.

Belongs to the Maf family. YhdE subfamily. The cofactor is a divalent metal cation.

Its subcellular location is the cytoplasm. The catalysed reaction is dTTP + H2O = dTMP + diphosphate + H(+). It carries out the reaction UTP + H2O = UMP + diphosphate + H(+). In terms of biological role, nucleoside triphosphate pyrophosphatase that hydrolyzes dTTP and UTP. May have a dual role in cell division arrest and in preventing the incorporation of modified nucleotides into cellular nucleic acids. This chain is dTTP/UTP pyrophosphatase, found in Cupriavidus metallidurans (strain ATCC 43123 / DSM 2839 / NBRC 102507 / CH34) (Ralstonia metallidurans).